Consider the following 517-residue polypeptide: GMP synthase [glutamine-hydrolyzing] (517 aa).

The 190-residue stretch at K4–D193 folds into the Glutamine amidotransferase type-1 domain. The Nucleophile role is filled by C79. Active-site residues include H167 and E169. Positions W194–R382 constitute a GMPS ATP-PPase domain. Position 221–227 (S221–S227) interacts with ATP.

Homodimer.

It catalyses the reaction XMP + L-glutamine + ATP + H2O = GMP + L-glutamate + AMP + diphosphate + 2 H(+). It participates in purine metabolism; GMP biosynthesis; GMP from XMP (L-Gln route): step 1/1. Its function is as follows. Catalyzes the synthesis of GMP from XMP. This chain is GMP synthase [glutamine-hydrolyzing], found in Phocaeicola vulgatus (strain ATCC 8482 / DSM 1447 / JCM 5826 / CCUG 4940 / NBRC 14291 / NCTC 11154) (Bacteroides vulgatus).